The sequence spans 83 residues: Large ribosomal subunit protein eL14 (83 aa).

The protein belongs to the eukaryotic ribosomal protein eL14 family.

The sequence is that of Large ribosomal subunit protein eL14 from Thermococcus onnurineus (strain NA1).